The primary structure comprises 85 residues: MFEKQKRVGLVVYLYYNRDARKVHKYGDVYYHSKKGRYLVMYVNQNDLEEKMKELQKLKFVKEAVASAFDEIDHQFVGNLHREAN.

It belongs to the UPF0298 family.

The protein localises to the cytoplasm. The polypeptide is UPF0298 protein SUB0431 (Streptococcus uberis (strain ATCC BAA-854 / 0140J)).